Reading from the N-terminus, the 98-residue chain is Protein Frey 1 (98 aa).

Residues 13–29 traverse the membrane as a helical segment; the sequence is AGLSLFLHLILAVALLR. Residues 60–87 form a disordered region; the sequence is YGILPKHPRPRGPRPLLSRAQQRKRDGP.

As to quaternary structure, interacts with SPPL2C (via active sites); the interaction stabilizes FREY1 protein and inhibits SPPL2C proteolytic activity. Interacts with IZUMO1; the interaction retains IZUMO1 at the endoplasmic reticulum membrane and coordinates IZUMO1 complex assembly.

It is found in the endoplasmic reticulum membrane. Its function is as follows. Key regulator for male fertility expressed transiently in round spermatids where it recruits IZUMO1 at the endoplasmic reticulum (ER) membrane and coordinates the oolemmal binding multimeric complex (IZUMO1 complex) assembly. Upon complete assembly of the IZUMO1 complex, its ER retention is released, facilitating IZUMO1 complex export to the acrosome. Through the interaction with SPPL2C, inhibits its intramembrane protease activity directly accessing the catalytic center of an I-CLiP. The polypeptide is Protein Frey 1 (Homo sapiens (Human)).